Here is a 107-residue protein sequence, read N- to C-terminus: Glutaredoxin 4 (107 aa).

Positions 4–106 (LDKIKKQISE…TLLAEVAAKH (103 aa)) constitute a Glutaredoxin domain. Lys21 contributes to the glutathione binding site. Cys29 is a binding site for [2Fe-2S] cluster. Residues Arg58, Phe70, and 83–84 (CD) contribute to the glutathione site.

The protein belongs to the glutaredoxin family. Monothiol subfamily. In terms of assembly, homodimer.

Its subcellular location is the cytoplasm. In terms of biological role, monothiol glutaredoxin involved in the biogenesis of iron-sulfur clusters. This chain is Glutaredoxin 4 (grxD), found in Haemophilus influenzae (strain ATCC 51907 / DSM 11121 / KW20 / Rd).